Reading from the N-terminus, the 383-residue chain is Glutamate 5-kinase (383 aa).

Lysine 17 is a binding site for ATP. Substrate-binding residues include serine 64, aspartate 151, and asparagine 165. 185-186 (SD) serves as a coordination point for ATP. In terms of domain architecture, PUA spans 291-367 (SGTIRVDAGA…DEIEGILGYN (77 aa)).

Belongs to the glutamate 5-kinase family.

The protein localises to the cytoplasm. The enzyme catalyses L-glutamate + ATP = L-glutamyl 5-phosphate + ADP. The protein operates within amino-acid biosynthesis; L-proline biosynthesis; L-glutamate 5-semialdehyde from L-glutamate: step 1/2. In terms of biological role, catalyzes the transfer of a phosphate group to glutamate to form L-glutamate 5-phosphate. The polypeptide is Glutamate 5-kinase (Methanosarcina barkeri (strain Fusaro / DSM 804)).